We begin with the raw amino-acid sequence, 62 residues long: Large ribosomal subunit protein eL24 (62 aa).

Residues cysteine 6, cysteine 9, cysteine 32, and cysteine 36 each contribute to the Zn(2+) site. The segment at cysteine 6–cysteine 36 adopts a C4-type zinc-finger fold.

The protein belongs to the eukaryotic ribosomal protein eL24 family. As to quaternary structure, part of the 50S ribosomal subunit. Forms a cluster with proteins L3 and L14. It depends on Zn(2+) as a cofactor.

Binds to the 23S rRNA. This is Large ribosomal subunit protein eL24 from Methanosarcina acetivorans (strain ATCC 35395 / DSM 2834 / JCM 12185 / C2A).